The following is a 540-amino-acid chain: 2-isopropylmalate synthase (540 aa).

The Pyruvate carboxyltransferase domain maps to 8-273 (VLIFDTTLRD…FFGRDQDSPT (266 aa)). Asp17, His208, His210, and Asn244 together coordinate Mn(2+). The regulatory domain stretch occupies residues 408-540 (QLQLVQVSCG…AVVLDARPTL (133 aa)).

The protein belongs to the alpha-IPM synthase/homocitrate synthase family. LeuA type 1 subfamily. Homodimer. Mn(2+) serves as cofactor.

It is found in the cytoplasm. The catalysed reaction is 3-methyl-2-oxobutanoate + acetyl-CoA + H2O = (2S)-2-isopropylmalate + CoA + H(+). It participates in amino-acid biosynthesis; L-leucine biosynthesis; L-leucine from 3-methyl-2-oxobutanoate: step 1/4. Its function is as follows. Catalyzes the condensation of the acetyl group of acetyl-CoA with 3-methyl-2-oxobutanoate (2-ketoisovalerate) to form 3-carboxy-3-hydroxy-4-methylpentanoate (2-isopropylmalate). In Parasynechococcus marenigrum (strain WH8102), this protein is 2-isopropylmalate synthase.